Here is a 227-residue protein sequence, read N- to C-terminus: Uracil-DNA glycosylase (227 aa).

Asp65 functions as the Proton acceptor in the catalytic mechanism.

The protein belongs to the uracil-DNA glycosylase (UDG) superfamily. UNG family.

The protein localises to the cytoplasm. It carries out the reaction Hydrolyzes single-stranded DNA or mismatched double-stranded DNA and polynucleotides, releasing free uracil.. Excises uracil residues from the DNA which can arise as a result of misincorporation of dUMP residues by DNA polymerase or due to deamination of cytosine. The chain is Uracil-DNA glycosylase from Bacillus velezensis (strain DSM 23117 / BGSC 10A6 / LMG 26770 / FZB42) (Bacillus amyloliquefaciens subsp. plantarum).